We begin with the raw amino-acid sequence, 247 residues long: Osmotin-like protein OSML81 (247 aa).

Positions 1–21 are cleaved as a signal peptide; sequence MGYLRSSFIFSLLAFVTYTYA. 8 cysteine pairs are disulfide-bonded: cysteine 30–cysteine 225, cysteine 72–cysteine 82, cysteine 87–cysteine 93, cysteine 141–cysteine 213, cysteine 146–cysteine 196, cysteine 154–cysteine 164, cysteine 168–cysteine 177, and cysteine 178–cysteine 183.

It belongs to the thaumatin family.

The protein is Osmotin-like protein OSML81 of Solanum commersonii (Commerson's wild potato).